We begin with the raw amino-acid sequence, 299 residues long: Lipoyl synthase 2 (299 aa).

[4Fe-4S] cluster is bound by residues Cys-45, Cys-50, Cys-56, Cys-71, Cys-75, Cys-78, and Ser-295. The Radical SAM core domain occupies 57–284 (YASGTATFLL…KSFCSKLGFK (228 aa)).

The protein belongs to the radical SAM superfamily. Lipoyl synthase family. It depends on [4Fe-4S] cluster as a cofactor.

The protein resides in the cytoplasm. It carries out the reaction [[Fe-S] cluster scaffold protein carrying a second [4Fe-4S](2+) cluster] + N(6)-octanoyl-L-lysyl-[protein] + 2 oxidized [2Fe-2S]-[ferredoxin] + 2 S-adenosyl-L-methionine + 4 H(+) = [[Fe-S] cluster scaffold protein] + N(6)-[(R)-dihydrolipoyl]-L-lysyl-[protein] + 4 Fe(3+) + 2 hydrogen sulfide + 2 5'-deoxyadenosine + 2 L-methionine + 2 reduced [2Fe-2S]-[ferredoxin]. It participates in protein modification; protein lipoylation via endogenous pathway; protein N(6)-(lipoyl)lysine from octanoyl-[acyl-carrier-protein]: step 2/2. In terms of biological role, catalyzes the radical-mediated insertion of two sulfur atoms into the C-6 and C-8 positions of the octanoyl moiety bound to the lipoyl domains of lipoate-dependent enzymes, thereby converting the octanoylated domains into lipoylated derivatives. The sequence is that of Lipoyl synthase 2 from Prochlorococcus marinus subsp. pastoris (strain CCMP1986 / NIES-2087 / MED4).